A 190-amino-acid chain; its full sequence is Putative serine carboxypeptidase-like 54 (190 aa).

A signal peptide spans 1–25; it reads MATKTFSLPFLLIVCIFSQLSSTFG. Asn-58, Asn-59, and Asn-105 each carry an N-linked (GlcNAc...) asparagine glycan.

The protein belongs to the peptidase S10 family.

Its subcellular location is the secreted. The polypeptide is Putative serine carboxypeptidase-like 54 (SCPL54) (Arabidopsis thaliana (Mouse-ear cress)).